We begin with the raw amino-acid sequence, 351 residues long: Autoinducer 2 import system permease protein LsrC (351 aa).

Helical transmembrane passes span 14 to 34, 39 to 59, 70 to 90, 93 to 113, 115 to 135, 155 to 175, 213 to 233, 252 to 272, and 284 to 304; these read LLAILTLFALLGIIDRNYFSL, MIFSSAQILILLAIGATLVML, ITGLCAVTVGMALNAGFGLAA, LFALLVGMVAGFFNGILVTWL, IPAIVATLGTLGLYRGLMLLL, ILFSISPIGWLAMLLILAMAW, MNGVMAALAGIVFASQIGFIP, GISLLGGTGTIIGAILGAFLL, and LPAWWNDFITGLVLLGVLVFD.

It belongs to the binding-protein-dependent transport system permease family. AraH/RbsC subfamily. As to quaternary structure, the complex is composed of two ATP-binding proteins (LsrA), two transmembrane proteins (LsrC and LsrD) and a solute-binding protein (LsrB).

The protein resides in the cell inner membrane. Part of the ABC transporter complex LsrABCD involved in autoinducer 2 (AI-2) import. Probably responsible for the translocation of the substrate across the membrane. The polypeptide is Autoinducer 2 import system permease protein LsrC (lsrC) (Yersinia pseudotuberculosis serotype O:1b (strain IP 31758)).